Consider the following 332-residue polypeptide: Large ribosomal subunit protein mL44 (332 aa).

The transit peptide at 1-30 (MASGLVRLLQQGPRCLLAPVAPKLVPPVRG) directs the protein to the mitochondrion. The region spanning 86–228 (DLLKTAFVNS…LITQMTGKEL (143 aa)) is the RNase III domain. Residues 236 to 306 (NPMGLLVEEL…ARVALRKLYG (71 aa)) form the DRBM domain.

Belongs to the ribonuclease III family. Mitochondrion-specific ribosomal protein mL44 subfamily. In terms of assembly, component of the mitochondrial ribosome large subunit (39S) which comprises a 16S rRNA and about 50 distinct proteins.

The protein resides in the mitochondrion. Component of the 39S subunit of mitochondrial ribosome. May have a function in the assembly/stability of nascent mitochondrial polypeptides exiting the ribosome. In Pongo abelii (Sumatran orangutan), this protein is Large ribosomal subunit protein mL44 (MRPL44).